The primary structure comprises 202 residues: Imidazoleglycerol-phosphate dehydratase (202 aa).

It belongs to the imidazoleglycerol-phosphate dehydratase family.

The protein localises to the cytoplasm. It catalyses the reaction D-erythro-1-(imidazol-4-yl)glycerol 3-phosphate = 3-(imidazol-4-yl)-2-oxopropyl phosphate + H2O. It participates in amino-acid biosynthesis; L-histidine biosynthesis; L-histidine from 5-phospho-alpha-D-ribose 1-diphosphate: step 6/9. The protein is Imidazoleglycerol-phosphate dehydratase of Corynebacterium glutamicum (strain ATCC 13032 / DSM 20300 / JCM 1318 / BCRC 11384 / CCUG 27702 / LMG 3730 / NBRC 12168 / NCIMB 10025 / NRRL B-2784 / 534).